A 226-amino-acid polypeptide reads, in one-letter code: Deoxyribose-phosphate aldolase (226 aa).

Catalysis depends on Glu-96, which acts as the Proton donor/acceptor. Lys-157 (schiff-base intermediate with acetaldehyde) is an active-site residue. Lys-185 serves as the catalytic Proton donor/acceptor.

This sequence belongs to the DeoC/FbaB aldolase family. DeoC type 1 subfamily.

The protein localises to the cytoplasm. It catalyses the reaction 2-deoxy-D-ribose 5-phosphate = D-glyceraldehyde 3-phosphate + acetaldehyde. Its pathway is carbohydrate degradation; 2-deoxy-D-ribose 1-phosphate degradation; D-glyceraldehyde 3-phosphate and acetaldehyde from 2-deoxy-alpha-D-ribose 1-phosphate: step 2/2. Functionally, catalyzes a reversible aldol reaction between acetaldehyde and D-glyceraldehyde 3-phosphate to generate 2-deoxy-D-ribose 5-phosphate. This Gloeobacter violaceus (strain ATCC 29082 / PCC 7421) protein is Deoxyribose-phosphate aldolase.